Consider the following 270-residue polypeptide: Formamidopyrimidine-DNA glycosylase (270 aa).

Pro-2 serves as the catalytic Schiff-base intermediate with DNA. Glu-3 functions as the Proton donor in the catalytic mechanism. The Proton donor; for beta-elimination activity role is filled by Lys-58. Positions 91, 110, and 151 each coordinate DNA. The FPG-type zinc-finger motif lies at 236–270 (FVYGRGGQPCKVCGTELREVKLGQRASVFCPKCQR). The active-site Proton donor; for delta-elimination activity is Arg-260.

This sequence belongs to the FPG family. As to quaternary structure, monomer. Zn(2+) is required as a cofactor.

The catalysed reaction is Hydrolysis of DNA containing ring-opened 7-methylguanine residues, releasing 2,6-diamino-4-hydroxy-5-(N-methyl)formamidopyrimidine.. It catalyses the reaction 2'-deoxyribonucleotide-(2'-deoxyribose 5'-phosphate)-2'-deoxyribonucleotide-DNA = a 3'-end 2'-deoxyribonucleotide-(2,3-dehydro-2,3-deoxyribose 5'-phosphate)-DNA + a 5'-end 5'-phospho-2'-deoxyribonucleoside-DNA + H(+). Its function is as follows. Involved in base excision repair of DNA damaged by oxidation or by mutagenic agents. Acts as a DNA glycosylase that recognizes and removes damaged bases. Has a preference for oxidized purines, such as 7,8-dihydro-8-oxoguanine (8-oxoG). Has AP (apurinic/apyrimidinic) lyase activity and introduces nicks in the DNA strand. Cleaves the DNA backbone by beta-delta elimination to generate a single-strand break at the site of the removed base with both 3'- and 5'-phosphates. This is Formamidopyrimidine-DNA glycosylase from Pseudomonas entomophila (strain L48).